Consider the following 517-residue polypeptide: V-type proton ATPase subunit B (517 aa).

Serine 4 bears the Phosphoserine mark. Lysine 14 participates in a covalent cross-link: Glycyl lysine isopeptide (Lys-Gly) (interchain with G-Cter in ubiquitin). Phosphoserine is present on serine 137. An ATP-binding site is contributed by arginine 381. The interval 487-517 (RARDDADEDEEDPDTRSSGKKKDASQEESLI) is disordered. Residues 500-511 (DTRSSGKKKDAS) are compositionally biased toward basic and acidic residues. Phosphoserine occurs at positions 503 and 504. Lysine 508 participates in a covalent cross-link: Glycyl lysine isopeptide (Lys-Gly) (interchain with G-Cter in ubiquitin). Residue serine 511 is modified to Phosphoserine; by ATM or ATR. A Phosphoserine modification is found at serine 515.

Belongs to the ATPase alpha/beta chains family. V-ATPase is a heteromultimeric enzyme composed of a peripheral catalytic V1 complex (components A to H) attached to an integral membrane V0 proton pore complex (components: a, c, c', c'', d, e, f and VOA1). Interacts with RAV1 and RAV2 components of the RAVE complex, which are essential for the stability and assembly of V-ATPase.

Its subcellular location is the vacuole membrane. Non-catalytic subunit of the V1 complex of vacuolar(H+)-ATPase (V-ATPase), a multisubunit enzyme composed of a peripheral complex (V1) that hydrolyzes ATP and a membrane integral complex (V0) that translocates protons. V-ATPase is responsible for acidifying and maintaining the pH of intracellular compartments. The protein is V-type proton ATPase subunit B (VMA2) of Saccharomyces cerevisiae (strain ATCC 204508 / S288c) (Baker's yeast).